The sequence spans 201 residues: Adenylyl-sulfate kinase (201 aa).

35 to 42 is an ATP binding site; sequence GLSGSGKS. Residue S109 is the Phosphoserine intermediate of the active site.

Belongs to the APS kinase family.

The catalysed reaction is adenosine 5'-phosphosulfate + ATP = 3'-phosphoadenylyl sulfate + ADP + H(+). Its pathway is sulfur metabolism; hydrogen sulfide biosynthesis; sulfite from sulfate: step 2/3. Functionally, catalyzes the synthesis of activated sulfate. The polypeptide is Adenylyl-sulfate kinase (Escherichia coli O139:H28 (strain E24377A / ETEC)).